Reading from the N-terminus, the 481-residue chain is Proline--tRNA ligase (481 aa).

It belongs to the class-II aminoacyl-tRNA synthetase family. ProS type 3 subfamily. Homodimer.

Its subcellular location is the cytoplasm. It carries out the reaction tRNA(Pro) + L-proline + ATP = L-prolyl-tRNA(Pro) + AMP + diphosphate. Catalyzes the attachment of proline to tRNA(Pro) in a two-step reaction: proline is first activated by ATP to form Pro-AMP and then transferred to the acceptor end of tRNA(Pro). The sequence is that of Proline--tRNA ligase from Chlorobium phaeobacteroides (strain DSM 266 / SMG 266 / 2430).